Reading from the N-terminus, the 1178-residue chain is DNA-directed RNA polymerase I subunit 2 (1178 aa).

A C4-type zinc finger spans residues 1097–1137 (CSLCGSLLTSSVVNVQQKKLIQEIGKLPPGRTPKKVTCYSC).

It belongs to the RNA polymerase beta chain family. As to quaternary structure, component of the RNA polymerase I (Pol I) complex consisting of at least 13 subunits.

It is found in the nucleus. The catalysed reaction is RNA(n) + a ribonucleoside 5'-triphosphate = RNA(n+1) + diphosphate. DNA-dependent RNA polymerase catalyzes the transcription of DNA into RNA using the four ribonucleoside triphosphates as substrates. Second largest core component of RNA polymerase I which synthesizes ribosomal RNA precursors. Proposed to contribute to the polymerase catalytic activity and forms the polymerase active center together with the largest subunit. Pol I is composed of mobile elements and NRPA2 is part of the core element with the central large cleft and probably a clamp element that moves to open and close the cleft. In terms of biological role, essential for the completion of the three rounds of mitosis in female megaspores required for the development of mature gametophytes. This chain is DNA-directed RNA polymerase I subunit 2, found in Arabidopsis thaliana (Mouse-ear cress).